Consider the following 493-residue polypeptide: Putative glycerol-3-phosphate transporter 5 (493 aa).

12 helical membrane passes run 25 to 44 (FTFHQILVLIITFTAYASFH), 83 to 103 (LGELDLAFLSSYALGMYFAGH), 113 to 133 (FLVFGMMGSGILTLVFGLGYW), 145 to 165 (VQIVCGLFQSIGWPCVVSVVG), 185 to 205 (SVGNILGSVIASSVLDFGWGW), 207 to 227 (FVLPGVLVLVSGVVVFMFLVV), 292 to 312 (FCLFFSKLVAYTFLYWLPYYL), 328 to 348 (GILSTVFDVGGVLGGISAGFI), 352 to 372 (IKARALTSITFLALSIPALIM), 375 to 395 (VYGSVSMFINIVLMFISGLLV), 428 to 448 (AIIDGTGSVGAALGPLLAGYI), and 452 to 472 (GWNSVFFMLIVSIFFAGLFLV).

Belongs to the major facilitator superfamily. Organophosphate:Pi antiporter (OPA) (TC 2.A.1.4) family.

The protein localises to the membrane. The protein is Putative glycerol-3-phosphate transporter 5 of Arabidopsis thaliana (Mouse-ear cress).